A 291-amino-acid polypeptide reads, in one-letter code: tRNA N(3)-cytidine methyltransferase METTL8, mitochondrial (291 aa).

The transit peptide at 1–21 directs the protein to the mitochondrion; that stretch reads MNMIWRNSISCLRLGKVPHRY. A Glycyl lysine isopeptide (Lys-Gly) (interchain with G-Cter in SUMO) cross-link involves residue Lys80. Trp89 and Tyr93 together coordinate S-adenosyl-L-methionine. A disordered region spans residues 141 to 187; sequence FSRMHCPTVPDEKNHYEKSSGSSEGQSKTESDFSNLDSEKHKKGPME. Over residues 159–168 the composition is skewed to low complexity; sequence SSGSSEGQSK. The S-adenosyl-L-methionine site is built by Gly204, Asp230, and Asp256.

The protein belongs to the methyltransferase superfamily. METL family. In terms of assembly, interacts with EP300.

It localises to the mitochondrion. The enzyme catalyses cytidine(32) in tRNA(Ser) + S-adenosyl-L-methionine = N(3)-methylcytidine(32) in tRNA(Ser) + S-adenosyl-L-homocysteine + H(+). It catalyses the reaction cytidine(32) in tRNA(Thr) + S-adenosyl-L-methionine = N(3)-methylcytidine(32) in tRNA(Thr) + S-adenosyl-L-homocysteine + H(+). The catalysed reaction is a cytidine in mRNA + S-adenosyl-L-methionine = an N(3)-methylcytidine in mRNA + S-adenosyl-L-homocysteine + H(+). In terms of biological role, mitochondrial S-adenosyl-L-methionine-dependent methyltransferase that mediates N(3)-methylcytidine modification of residue 32 of the tRNA anticodon loop of mitochondrial tRNA(Ser)(UCN) and tRNA(Thr). N(3)-methylcytidine methylation modification regulates mitochondrial translation efficiency and is required for activity of the respiratory chain. N(3)-methylcytidine methylation of mitochondrial tRNA(Ser)(UCN) requires the formation of N(6)-dimethylallyladenosine(37) (i6A37) by TRIT1 as prerequisite. May also mediate N(3)-methylcytidine modification of mRNAs. The existence of N(3)-methylcytidine modification on mRNAs is however unclear, and additional evidences are required to confirm the role of the N(3)-methylcytidine-specific mRNA methyltransferase activity of METTL8 in vivo. The sequence is that of tRNA N(3)-cytidine methyltransferase METTL8, mitochondrial from Homo sapiens (Human).